A 100-amino-acid chain; its full sequence is Putative septation protein SpoVG (100 aa).

The protein belongs to the SpoVG family.

Functionally, could be involved in septation. The polypeptide is Putative septation protein SpoVG (Staphylococcus haemolyticus (strain JCSC1435)).